A 251-amino-acid chain; its full sequence is Ubiquinone/menaquinone biosynthesis C-methyltransferase UbiE (251 aa).

S-adenosyl-L-methionine is bound by residues threonine 74, aspartate 95, and 123-124; that span reads NA.

It belongs to the class I-like SAM-binding methyltransferase superfamily. MenG/UbiE family.

It carries out the reaction a 2-demethylmenaquinol + S-adenosyl-L-methionine = a menaquinol + S-adenosyl-L-homocysteine + H(+). It catalyses the reaction a 2-methoxy-6-(all-trans-polyprenyl)benzene-1,4-diol + S-adenosyl-L-methionine = a 5-methoxy-2-methyl-3-(all-trans-polyprenyl)benzene-1,4-diol + S-adenosyl-L-homocysteine + H(+). Its pathway is quinol/quinone metabolism; menaquinone biosynthesis; menaquinol from 1,4-dihydroxy-2-naphthoate: step 2/2. The protein operates within cofactor biosynthesis; ubiquinone biosynthesis. Methyltransferase required for the conversion of demethylmenaquinol (DMKH2) to menaquinol (MKH2) and the conversion of 2-polyprenyl-6-methoxy-1,4-benzoquinol (DDMQH2) to 2-polyprenyl-3-methyl-6-methoxy-1,4-benzoquinol (DMQH2). The protein is Ubiquinone/menaquinone biosynthesis C-methyltransferase UbiE of Shewanella woodyi (strain ATCC 51908 / MS32).